Here is a 361-residue protein sequence, read N- to C-terminus: Ankyrin repeat domain-containing protein 16 (361 aa).

ANK repeat units lie at residues Ala36–Ala66, Asp70–Ser99, Ala103–Leu132, Asp136–Lys165, Ile170–Cys200, Cys204–Ser233, Met238–Val268, Ser273–Ser302, and Arg306–Glu335.

As to quaternary structure, interacts with AARS; the interaction is direct. Widely expressed in brain (at protein level).

Its subcellular location is the cytoplasm. The protein resides in the nucleus. In terms of biological role, required to prevent the misactivation of serine (Ser) with tRNA(Ala) by promoting the hydrolysis of Ser-mischarged tRNA(Ala), thereby playing a role in translational fidelity. Binds directly to the catalytic domain of AARS/AlaRS and captures Ser that is misactivated by AARS/AlaRS, preventing the charging of Ser adenylates to tRNA(Ala) and precluding Ser misincorporation in nascent peptides. In Mus musculus (Mouse), this protein is Ankyrin repeat domain-containing protein 16.